The following is a 585-amino-acid chain: SLAIN motif-containing protein-like (585 aa).

5 disordered regions span residues Met1–Thr34, Asn55–Glu125, Gln324–Cys365, Pro402–Gln476, and Gly492–Tyr585. Over residues Gly68–Asn83 the composition is skewed to polar residues. Residues Ala327–Arg345 are compositionally biased toward low complexity. Residues Gln351 to Cys365 show a composition bias toward acidic residues. 3 stretches are compositionally biased toward polar residues: residues Pro425–Arg434, Asn441–Gln476, and Ala549–Ser563. Over residues Leu575 to Tyr585 the composition is skewed to basic and acidic residues.

The protein belongs to the SLAIN motif-containing family.

The sequence is that of SLAIN motif-containing protein-like from Danio rerio (Zebrafish).